We begin with the raw amino-acid sequence, 122 residues long: Large ribosomal subunit protein bL20 (122 aa).

This sequence belongs to the bacterial ribosomal protein bL20 family.

Its function is as follows. Binds directly to 23S ribosomal RNA and is necessary for the in vitro assembly process of the 50S ribosomal subunit. It is not involved in the protein synthesizing functions of that subunit. In Treponema pallidum (strain Nichols), this protein is Large ribosomal subunit protein bL20 (rplT).